The sequence spans 370 residues: Flagellar P-ring protein (370 aa).

The N-terminal stretch at 1–21 is a signal peptide; it reads MKYILIKLSIVMIFIINSASK.

Belongs to the FlgI family. The basal body constitutes a major portion of the flagellar organelle and consists of four rings (L,P,S, and M) mounted on a central rod.

The protein resides in the bacterial flagellum basal body. Its function is as follows. Assembles around the rod to form the L-ring and probably protects the motor/basal body from shearing forces during rotation. The polypeptide is Flagellar P-ring protein (Wigglesworthia glossinidia brevipalpis).